The chain runs to 395 residues: Putative nickel insertion protein (395 aa).

This sequence belongs to the LarC family.

In Roseiflexus castenholzii (strain DSM 13941 / HLO8), this protein is Putative nickel insertion protein.